Here is a 72-residue protein sequence, read N- to C-terminus: Protein SlyX homolog (72 aa).

This sequence belongs to the SlyX family.

This Vibrio cholerae serotype O1 (strain ATCC 39541 / Classical Ogawa 395 / O395) protein is Protein SlyX homolog.